Reading from the N-terminus, the 402-residue chain is UDP-N-acetylmuramoylalanine--D-glutamate ligase (402 aa).

97–103 (GTNGKTT) lines the ATP pocket.

This sequence belongs to the MurCDEF family.

Its subcellular location is the cytoplasm. The catalysed reaction is UDP-N-acetyl-alpha-D-muramoyl-L-alanine + D-glutamate + ATP = UDP-N-acetyl-alpha-D-muramoyl-L-alanyl-D-glutamate + ADP + phosphate + H(+). It functions in the pathway cell wall biogenesis; peptidoglycan biosynthesis. Its function is as follows. Cell wall formation. Catalyzes the addition of glutamate to the nucleotide precursor UDP-N-acetylmuramoyl-L-alanine (UMA). This chain is UDP-N-acetylmuramoylalanine--D-glutamate ligase, found in Campylobacter jejuni subsp. jejuni serotype O:23/36 (strain 81-176).